The chain runs to 109 residues: Large ribosomal subunit protein eL42 (109 aa).

The disordered stretch occupies residues 23–53 (VSQYKKSKESTHAQGRRRYDMKQSGFGGQTK). Residues 28-43 (KSKESTHAQGRRRYDM) show a composition bias toward basic and acidic residues.

Belongs to the eukaryotic ribosomal protein eL42 family.

Its subcellular location is the cytoplasm. This is Large ribosomal subunit protein eL42 (RPL36A) from Tetrahymena thermophila (strain SB210).